Here is a 325-residue protein sequence, read N- to C-terminus: BES1/BZR1 homolog protein 4 (325 aa).

Residues 1–21 (MTSGTRMPTWRERENNKRRER) form a disordered region. A required for DNA-binding region spans residues 6–89 (RMPTWREREN…RMEIGGGSAT (84 aa)). Thr169 is subject to Phosphothreonine. The segment at 304-325 (ERIHEESGSDDLELTLGNSSTR) is disordered.

This sequence belongs to the BZR/LAT61 family. Post-translationally, phosphorylated. Phosphorylation increases protein degradation.

In Arabidopsis thaliana (Mouse-ear cress), this protein is BES1/BZR1 homolog protein 4 (BEH4).